Reading from the N-terminus, the 120-residue chain is Proteinase inhibitor (120 aa).

Residues Met1 to Ala19 form the signal peptide. A disulfide bridge links Cys43 with Cys65.

It belongs to the protease inhibitor I38 family. As to quaternary structure, monomer.

It is found in the periplasm. Its function is as follows. Inhibitor of the extracellular proteases A, B, and C of E.chrysanthemi and the S.marcescens 50 kDa extracellular protease. It forms a non-covalent bond with the proteases and may prevent autocatalytic cleavage of the proteases zymogen in the periplasm. The protein is Proteinase inhibitor (inh) of Dickeya chrysanthemi (Pectobacterium chrysanthemi).